Reading from the N-terminus, the 428-residue chain is Serine--tRNA ligase (428 aa).

L-serine is bound at residue 231-233 (TAE). 262–264 (RSE) is an ATP binding site. Position 285 (E285) interacts with L-serine. 349-352 (EISS) is an ATP binding site. S385 contacts L-serine.

Belongs to the class-II aminoacyl-tRNA synthetase family. Type-1 seryl-tRNA synthetase subfamily. In terms of assembly, homodimer. The tRNA molecule binds across the dimer.

It localises to the cytoplasm. It carries out the reaction tRNA(Ser) + L-serine + ATP = L-seryl-tRNA(Ser) + AMP + diphosphate + H(+). It catalyses the reaction tRNA(Sec) + L-serine + ATP = L-seryl-tRNA(Sec) + AMP + diphosphate + H(+). It participates in aminoacyl-tRNA biosynthesis; selenocysteinyl-tRNA(Sec) biosynthesis; L-seryl-tRNA(Sec) from L-serine and tRNA(Sec): step 1/1. Functionally, catalyzes the attachment of serine to tRNA(Ser). Is also able to aminoacylate tRNA(Sec) with serine, to form the misacylated tRNA L-seryl-tRNA(Sec), which will be further converted into selenocysteinyl-tRNA(Sec). The protein is Serine--tRNA ligase of Staphylococcus haemolyticus (strain JCSC1435).